Consider the following 157-residue polypeptide: Cytochrome c-type biogenesis protein CcmE (157 aa).

The Cytoplasmic segment spans residues 1-8 (MHPVRKQR). The helical; Signal-anchor for type II membrane protein transmembrane segment at 9 to 29 (LMTVLFIVIASSVAVGLMVFA) threads the bilayer. At 30 to 157 (LSKNLNLFYP…KTCEGLDYAS (128 aa)) the chain is on the periplasmic side. Residues His124 and Tyr128 each contribute to the heme site.

The protein belongs to the CcmE/CycJ family.

The protein resides in the cell inner membrane. Heme chaperone required for the biogenesis of c-type cytochromes. Transiently binds heme delivered by CcmC and transfers the heme to apo-cytochromes in a process facilitated by CcmF and CcmH. The protein is Cytochrome c-type biogenesis protein CcmE of Saccharophagus degradans (strain 2-40 / ATCC 43961 / DSM 17024).